The chain runs to 241 residues: Sugar fermentation stimulation protein homolog (241 aa).

This sequence belongs to the SfsA family.

This Thermosynechococcus vestitus (strain NIES-2133 / IAM M-273 / BP-1) protein is Sugar fermentation stimulation protein homolog.